The primary structure comprises 93 residues: Aspartyl/glutamyl-tRNA(Asn/Gln) amidotransferase subunit C (93 aa).

It belongs to the GatC family. Heterotrimer of A, B and C subunits.

The enzyme catalyses L-glutamyl-tRNA(Gln) + L-glutamine + ATP + H2O = L-glutaminyl-tRNA(Gln) + L-glutamate + ADP + phosphate + H(+). It carries out the reaction L-aspartyl-tRNA(Asn) + L-glutamine + ATP + H2O = L-asparaginyl-tRNA(Asn) + L-glutamate + ADP + phosphate + 2 H(+). Allows the formation of correctly charged Asn-tRNA(Asn) or Gln-tRNA(Gln) through the transamidation of misacylated Asp-tRNA(Asn) or Glu-tRNA(Gln) in organisms which lack either or both of asparaginyl-tRNA or glutaminyl-tRNA synthetases. The reaction takes place in the presence of glutamine and ATP through an activated phospho-Asp-tRNA(Asn) or phospho-Glu-tRNA(Gln). In Nautilia profundicola (strain ATCC BAA-1463 / DSM 18972 / AmH), this protein is Aspartyl/glutamyl-tRNA(Asn/Gln) amidotransferase subunit C.